We begin with the raw amino-acid sequence, 69 residues long: DNA-directed RNA polymerase subunit omega (69 aa).

The protein belongs to the RNA polymerase subunit omega family. As to quaternary structure, the RNAP catalytic core consists of 2 alpha, 1 beta, 1 beta' and 1 omega subunit. When a sigma factor is associated with the core the holoenzyme is formed, which can initiate transcription.

It catalyses the reaction RNA(n) + a ribonucleoside 5'-triphosphate = RNA(n+1) + diphosphate. In terms of biological role, promotes RNA polymerase assembly. Latches the N- and C-terminal regions of the beta' subunit thereby facilitating its interaction with the beta and alpha subunits. The protein is DNA-directed RNA polymerase subunit omega of Symbiobacterium thermophilum (strain DSM 24528 / JCM 14929 / IAM 14863 / T).